A 269-amino-acid chain; its full sequence is Diadenylate cyclase (269 aa).

A DAC domain is found at 109–266; that stretch reads RSGIYDLFAN…GGKMILEIDP (158 aa).

The protein belongs to the adenylate cyclase family. DacZ subfamily. Mn(2+) is required as a cofactor.

The catalysed reaction is 2 ATP = 3',3'-c-di-AMP + 2 diphosphate. Diadenylate cyclase that catalyzes the condensation of 2 ATP molecules into cyclic di-AMP (c-di-AMP). c-di-AMP is a second messenger for intracellular signal transduction involved in the control of important regulatory processes such as osmoregulation. Is essential for H.volcanii. Overexpression of DacZ leads to cell death, suggesting the need for tight regulation of c-di-AMP levels. Cannot use GTP as substrate. This Haloferax volcanii (strain ATCC 29605 / DSM 3757 / JCM 8879 / NBRC 14742 / NCIMB 2012 / VKM B-1768 / DS2) (Halobacterium volcanii) protein is Diadenylate cyclase.